The sequence spans 350 residues: Protein-glutamate methylesterase/protein-glutamine glutaminase (350 aa).

Residues 5-122 (KVLCVDDSAL…RDGLIEYSEV (118 aa)) form the Response regulatory domain. Asp56 carries the post-translational modification 4-aspartylphosphate. The 195-residue stretch at 152–346 (PFASSEKLVI…ERILTRLGDR (195 aa)) folds into the CheB-type methylesterase domain. Catalysis depends on residues Ser165, His191, and Asp288.

Belongs to the CheB family. Phosphorylated by CheA. Phosphorylation of the N-terminal regulatory domain activates the methylesterase activity.

It localises to the cytoplasm. The enzyme catalyses [protein]-L-glutamate 5-O-methyl ester + H2O = L-glutamyl-[protein] + methanol + H(+). The catalysed reaction is L-glutaminyl-[protein] + H2O = L-glutamyl-[protein] + NH4(+). Its function is as follows. Involved in chemotaxis. Part of a chemotaxis signal transduction system that modulates chemotaxis in response to various stimuli. Catalyzes the demethylation of specific methylglutamate residues introduced into the chemoreceptors (methyl-accepting chemotaxis proteins or MCP) by CheR. Also mediates the irreversible deamidation of specific glutamine residues to glutamic acid. In Bordetella pertussis (strain Tohama I / ATCC BAA-589 / NCTC 13251), this protein is Protein-glutamate methylesterase/protein-glutamine glutaminase.